Here is a 491-residue protein sequence, read N- to C-terminus: Tryptophan 5-hydroxylase 2 (491 aa).

Phosphoserine is present on Ser-19. Positions 33-63 (NLTVNKSNSGKNDDKKGNKGSSRSETAPDSG) are disordered. In terms of domain architecture, ACT spans 66–141 (AVVFSLRNEV…TIVTLNPPEN (76 aa)). His-319, His-324, and Glu-364 together coordinate Fe cation.

The protein belongs to the biopterin-dependent aromatic amino acid hydroxylase family. As to quaternary structure, interacts with DNAJC12. Requires Fe(2+) as cofactor.

It catalyses the reaction (6R)-L-erythro-5,6,7,8-tetrahydrobiopterin + L-tryptophan + O2 = 5-hydroxy-L-tryptophan + (4aS,6R)-4a-hydroxy-L-erythro-5,6,7,8-tetrahydrobiopterin. It functions in the pathway aromatic compound metabolism; serotonin biosynthesis; serotonin from L-tryptophan: step 1/2. The sequence is that of Tryptophan 5-hydroxylase 2 (TPH2) from Equus caballus (Horse).